Reading from the N-terminus, the 211-residue chain is uncharacterized protein (211 aa).

Belongs to the nucleoside deoxyribosyltransferase family.

The protein resides in the cytoplasm. The protein localises to the nucleus. This is an uncharacterized protein from Schizosaccharomyces pombe (strain 972 / ATCC 24843) (Fission yeast).